The primary structure comprises 127 residues: Anti-adapter protein IraD (127 aa).

Belongs to the GpW/Gp25 family. IraD subfamily. As to quaternary structure, interacts with RssB.

The protein localises to the cytoplasm. Functionally, inhibits RpoS proteolysis by regulating RssB activity, thereby increasing the stability of the sigma stress factor RpoS during oxidative stress. Its effect on RpoS stability is due to its interaction with RssB, which probably blocks the interaction of RssB with RpoS, and the consequent delivery of the RssB-RpoS complex to the ClpXP protein degradation pathway. The sequence is that of Anti-adapter protein IraD from Escherichia coli O6:H1 (strain CFT073 / ATCC 700928 / UPEC).